The chain runs to 468 residues: Acetyl-CoA decarbonylase/synthase complex subunit gamma 1 (468 aa).

The 4Fe-4S domain occupies 1–61; the sequence is MKINSPLEAY…YAKKLAELDR (61 aa). 4 residues coordinate [4Fe-4S] cluster: Cys-18, Cys-21, Cys-26, and Cys-43.

Heterodimer of delta and gamma chains. The ACDS complex is made up of alpha, epsilon, beta, gamma and delta chains with a probable stoichiometry of (alpha(2)epsilon(2))(4)-beta(8)-(gamma(1)delta(1))(8). The cofactor is corrinoid. [4Fe-4S] cluster serves as cofactor.

It carries out the reaction 5,6,7,8-tetrahydrosarcinapterin + methyl-Co(III)-[corrinoid Fe-S protein] = 5-methyltetrahydrosarcinapterin + Co(I)-[corrinoid Fe-S protein] + H(+). The protein operates within one-carbon metabolism; methanogenesis from acetate. Functionally, part of a complex that catalyzes the reversible cleavage of acetyl-CoA, allowing growth on acetate as sole source of carbon and energy. The polypeptide is Acetyl-CoA decarbonylase/synthase complex subunit gamma 1 (Methanosarcina thermophila).